The following is a 311-amino-acid chain: Probable inactive peptidyl-prolyl cis-trans isomerase-like 6 (311 aa).

In terms of domain architecture, PPIase cyclophilin-type spans 145-308 (FLDICIDSSP…HMCRITDSGD (164 aa)).

This sequence belongs to the cyclophilin-type PPIase family.

In terms of biological role, probable inactive PPIase with no peptidyl-prolyl cis-trans isomerase activity. This Homo sapiens (Human) protein is Probable inactive peptidyl-prolyl cis-trans isomerase-like 6.